We begin with the raw amino-acid sequence, 142 residues long: Large ribosomal subunit protein uL11 (142 aa).

The protein belongs to the universal ribosomal protein uL11 family. In terms of assembly, part of the ribosomal stalk of the 50S ribosomal subunit. Interacts with L10 and the large rRNA to form the base of the stalk. L10 forms an elongated spine to which L12 dimers bind in a sequential fashion forming a multimeric L10(L12)X complex. In terms of processing, one or more lysine residues are methylated.

In terms of biological role, forms part of the ribosomal stalk which helps the ribosome interact with GTP-bound translation factors. In Shewanella sediminis (strain HAW-EB3), this protein is Large ribosomal subunit protein uL11.